The primary structure comprises 101 residues: MQLYTYLYLLVPLVTFHLILGTGTLDHGGALTERRSTDAIALKPEPVLLQKSSARSTDDNGNDRLTQMKRILKKRGNKARGEEEVAKMAAELAREDAVNGK.

The signal sequence occupies residues Met-1–Gly-21. Residues Thr-22–Arg-80 constitute a propeptide that is removed on maturation. 4-carboxyglutamate is present on residues Glu-83, Glu-84, Glu-91, and Glu-95. The a divalent metal cation site is built by Glu-91 and Glu-95. Asparagine amide is present on Asn-99.

It belongs to the conotoxin B superfamily. It depends on Ca(2+) as a cofactor. Requires Mg(2+) as cofactor. Expressed by the venom duct.

The protein localises to the secreted. Conantokins inhibit N-methyl-D-aspartate (NMDA) receptors. This toxin is far less potent as an anticonvulsant compound than conantokin-R. It induces sleep-like symptoms in mice. The sequence is that of Conantokin-L from Conus lynceus (Lynceus cone).